The primary structure comprises 150 residues: UPF0178 protein AHA_0543 (150 aa).

Belongs to the UPF0178 family.

The polypeptide is UPF0178 protein AHA_0543 (Aeromonas hydrophila subsp. hydrophila (strain ATCC 7966 / DSM 30187 / BCRC 13018 / CCUG 14551 / JCM 1027 / KCTC 2358 / NCIMB 9240 / NCTC 8049)).